A 575-amino-acid chain; its full sequence is Serine/threonine-protein kinase Pink1, mitochondrial (575 aa).

Residues 1–51 (MSLLAYTNLLLQNGRIFRYYKKANIKKFIKKIIKLDLKSTPSEASVSRQTF) constitute a mitochondrion transit peptide. Over 52 to 94 (LSTGLNSVKNAVQLQARKLLINNVLERVTPTLNSDLKKKAAKR) the chain is Mitochondrial intermembrane. A helical membrane pass occupies residues 95–118 (LFYGDSAPFFALVGVSLASGSGLL). Over 119–575 (TKDDELEGIC…KWIQELHIYN (457 aa)) the chain is Cytoplasmic. Lysine 193 serves as a coordination point for ATP. Phosphoserine; by autocatalysis occurs at positions 202 and 204. Residue glutamate 214 participates in Mg(2+) binding. Threonine 305 is subject to Phosphothreonine; by autocatalysis. Aspartate 334 acts as the Proton acceptor in catalysis. Mg(2+) is bound by residues asparagine 339 and aspartate 357.

Belongs to the protein kinase superfamily. Ser/Thr protein kinase family. Requires Mg(2+) as cofactor. Proteolytically cleaved. In healthy cells, the precursor is continuously imported into mitochondria where it is proteolytically cleaved into its short form by the mitochondrial rhomboid protease rho-7 (8231301). The short form is then released into the cytosol where it rapidly undergoes proteasome-dependent degradation. In unhealthy cells, when cellular stress conditions lead to the loss of mitochondrial membrane potential, mitochondrial import is impaired leading to the precursor accumulating on the outer mitochondrial membrane (OMM). In terms of processing, autophosphorylated. Autophosphorylated on Ser-202, which activates kinase activity. Loss of mitochondrial membrane potential results in the precursor accumulating on the outer mitochondrial membrane (OMM) where it is activated by autophosphorylation at Ser-202. Autophosphorylation is sufficient and essential for selective recruitment of park to depolarized mitochondria, likely via Pink1-dependent phosphorylation of polyubiquitin chains. Also autophosphorylated at Ser-204 and Thr-305.

The protein localises to the mitochondrion outer membrane. It localises to the mitochondrion inner membrane. It is found in the cytoplasm. The protein resides in the cytosol. The catalysed reaction is L-seryl-[protein] + ATP = O-phospho-L-seryl-[protein] + ADP + H(+). The enzyme catalyses L-threonyl-[protein] + ATP = O-phospho-L-threonyl-[protein] + ADP + H(+). Functionally, acts as a serine/threonine-protein kinase. Exhibits a substrate preference for proline at position P+1 and a general preference at several residues for basic residues such as arginine. Also exhibits moderate preferences for a phosphotyrosine at position P-3 and a tryptophan at P-5. Critical to mitochondrial homeostasis it mediates several pathways that maintain mitochondrial health and function Protects against mitochondrial dysfunction during cellular stress by phosphorylating mitochondrial proteins such as park and likely Drp1, to coordinate mitochondrial quality control mechanisms that remove and replace dysfunctional mitochondrial components. Depending on the severity of mitochondrial damage and/or dysfunction, activity ranges from preventing apoptosis and stimulating mitochondrial biogenesis to regulating mitochondrial dynamics and eliminating severely damaged mitochondria via mitophagy. Appears to be particularly important in maintaining the physiology and function of cells with high energy demands that are undergoing stress or altered metabolic environment, including spermatids, muscle cells and neurons such as the dopaminergic (DA) neurons. Mediates the translocation and activation of park at the outer membrane (OMM) of dysfunctional/depolarized mitochondria. At the OMM of damaged mitochondria, phosphorylates pre-existing polyubiquitin chains, the Pink1-phosphorylated polyubiquitin then recruits park from the cytosol to the OMM where park is fully activated by phosphorylation at 'Ser-94' by Pink1. When cellular stress results in irreversible mitochondrial damage, functions with park to promote the clearance of dysfunctional and/or depolarized mitochondria by selective autophagy (mitophagy). The Pink1-park pathway also promotes fission and/or inhibits fusion of damaged mitochondria, by phosphorylating and thus promoting the park-dependent degradation of proteins involved in mitochondrial fusion/fission such as Marf, Opa1 and fzo. This prevents the refusion of unhealthy mitochondria with the mitochondrial network or initiates mitochondrial fragmentation facilitating their later engulfment by autophagosomes. Also likely to promote mitochondrial fission independently of park and Atg7-mediated mitophagy, via the phosphorylation and activation of Drp1. Regulates motility of damaged mitochondria by phosphorylating Miro which likely promotes its park-dependent degradation by the proteasome; in motor neurons, this inhibits mitochondrial intracellular anterograde transport along the axons which probably increases the chance of the mitochondria being eliminated in the soma. The Pink1-park pathway is also involved in mitochondrial regeneration processes such as promoting mitochondrial biogenesis, activating localized mitochondrial repair, promoting selective turnover of mitochondrial proteins and initiating the mitochondrial import of endogenous proteins. Involved in mitochondrial biogenesis by promoting the park-dependent ubiquitination of transcriptional repressor Paris which leads to its subsequent proteasomal degradation and allows activation of the transcription factor srl. Functions with park to promote localized mitochondrial repair by activating the translation of specific nuclear-encoded mitochondrial RNAs (nc-mtRNAs) on the mitochondrial surface, including several key electron transport chain component nc-mtRNAs. During oogenesis, phosphorylates and inactivates larp on the membrane of defective mitochondria, thus impairing local translation and mtDNA replication and consequently, reducing transmission of deleterious mtDNA mutations to the mature oocyte. Phosphorylates the mitochondrial acyl-CoA dehydrogenase Mcad, and appears to be important for maintaining fatty acid and amino acid metabolism via a mechanism that is independent of it's role in maintaining production of ATP. The chain is Serine/threonine-protein kinase Pink1, mitochondrial from Pediculus humanus subsp. corporis (Body louse).